We begin with the raw amino-acid sequence, 650 residues long: Solute carrier family 23 member 2 (650 aa).

The span at methionine 1 to glutamate 20 shows a compositional bias: polar residues. The disordered stretch occupies residues methionine 1–glycine 21. Residues threonine 9–tyrosine 110 lie on the Cytoplasmic side of the membrane. Position 70 is a phosphoserine (serine 70). At threonine 75 the chain carries Phosphothreonine. Residue serine 78 is modified to Phosphoserine. At threonine 79 the chain carries Phosphothreonine. Position 81 is a phosphoserine (serine 81). The helical transmembrane segment at leucine 111–glycine 131 threads the bilayer. Topologically, residues tyrosine 132 to glutamine 139 are extracellular. Residues leucine 140–cysteine 160 traverse the membrane as a helical segment. Residue arginine 161 is a topological domain, cytoplasmic. A helical membrane pass occupies residues leucine 162 to leucine 182. Over aspartate 183–alanine 218 the chain is Extracellular. Asparagine 188 and asparagine 196 each carry an N-linked (GlcNAc...) asparagine glycan. A helical transmembrane segment spans residues isoleucine 219–leucine 239. At lysine 240 to alanine 266 the chain is on the cytoplasmic side. Residues glycine 267–serine 284 form a helical membrane-spanning segment. The Extracellular segment spans residues glutamine 285 to arginine 288. Positions asparagine 289–glycine 302 form an intramembrane region, helical. Topologically, residues tryptophan 303–glutamine 309 are extracellular. Residues leucine 310–phenylalanine 330 traverse the membrane as a helical segment. Residues threonine 331–glycine 371 lie on the Cytoplasmic side of the membrane. A helical transmembrane segment spans residues leucine 372–isoleucine 392. Over glutamate 393–arginine 417 the chain is Extracellular. The helical transmembrane segment at glycine 418–serine 438 threads the bilayer. Residues threonine 439–cysteine 461 lie on the Cytoplasmic side of the membrane. Residues glycine 462 to leucine 482 traverse the membrane as a helical segment. Topologically, residues proline 483 to proline 485 are extracellular. Residues valine 486–leucine 506 form a helical membrane-spanning segment. Over glutamine 507–asparagine 516 the chain is Cytoplasmic. A helical transmembrane segment spans residues leucine 517–asparagine 537. At proline 538–aspartate 547 the chain is on the extracellular side. A helical transmembrane segment spans residues glutamine 548–leucine 568. The Cytoplasmic segment spans residues aspartate 569–glycine 650. At threonine 649 the chain carries Phosphothreonine.

Belongs to the nucleobase:cation symporter-2 (NCS2) (TC 2.A.40) family. Interacts with CLSTN3. Post-translationally, phosphorylated. As to expression, ubiquitous.

Its subcellular location is the cell membrane. The enzyme catalyses L-ascorbate(out) + 2 Na(+)(out) = L-ascorbate(in) + 2 Na(+)(in). Sodium/ascorbate cotransporter. Mediates electrogenic uptake of vitamin C, with a stoichiometry of 2 Na(+) for each ascorbate. The protein is Solute carrier family 23 member 2 (SLC23A2) of Homo sapiens (Human).